Consider the following 276-residue polypeptide: Small ribosomal subunit protein uS2 (276 aa).

It belongs to the universal ribosomal protein uS2 family.

This Chlamydia caviae (strain ATCC VR-813 / DSM 19441 / 03DC25 / GPIC) (Chlamydophila caviae) protein is Small ribosomal subunit protein uS2.